The sequence spans 1265 residues: Shugoshin 2 (1265 aa).

The stretch at 69 to 116 (KENSRRITTEKMLLQKEVEKLNFENTFLRLKLNNLNKKLIDIEALMNN) forms a coiled coil. Disordered regions lie at residues 161 to 202 (LTSN…STQD), 230 to 287 (DVPP…NLSA), 305 to 339 (LNCNNEINGHTNETNTEMQRNKQDLPGLSSESARE), and 381 to 447 (GIKK…GAED). Polar residues predominate over residues 190–202 (SSGSTTQPLSTQD). The segment covering 232–242 (PPRESHSHSDQ) has biased composition (basic and acidic residues). Polar residues predominate over residues 305–322 (LNCNNEINGHTNETNTEM). Basic and acidic residues-rich tracts occupy residues 389-410 (KTNEHGMKTFRKVKDSSSEKKR) and 425-446 (IGEKIENRTERSDVLDGKRGAE). Positions 452–476 (FNNEQLAQMNEQLAQVNELKKMTLQ) form a coiled coil. Residues 499 to 526 (EQEETYSLSQSSGKFHQESKFDKGQNSL) form a disordered region. Residues 503 to 512 (TYSLSQSSGK) show a composition bias toward polar residues. Positions 603–626 (EQNESNINKLRKKVNRKTEIISGM) form a coiled coil. Residues 1073-1083 (NKMTSKSKKRK) are compositionally biased toward basic residues. The segment at 1073-1093 (NKMTSKSKKRKTSIDPSPESH) is disordered. Ser-1144 is modified (phosphoserine). The interval 1200–1265 (KVNRRTQKSG…EPSLRDKMRR (66 aa)) is disordered. The span at 1217 to 1230 (DLSNTSFVSNNTAE) shows a compositional bias: polar residues. Positions 1231 to 1243 (SENKSEDLSSERT) are enriched in basic and acidic residues.

This sequence belongs to the shugoshin family. Part of an astrin (SPAG5) -kinastrin (SKAP) complex containing KNSTRN, SPAG5, PLK1, DYNLL1 and SGO2. Interacts with CDCA8. Directly interacts with PPP2CA.

The protein resides in the nucleus. It is found in the chromosome. The protein localises to the centromere. Its subcellular location is the kinetochore. In terms of biological role, cooperates with PPP2CA to protect centromeric cohesin from separase-mediated cleavage in oocytes specifically during meiosis I. Has a crucial role in protecting REC8 at centromeres from cleavage by separase. During meiosis, protects centromeric cohesion complexes until metaphase II/anaphase II transition, preventing premature release of meiosis-specific REC8 cohesin complexes from anaphase I centromeres. Is thus essential for an accurate gametogenesis. May act by targeting PPP2CA to centromeres, thus leading to cohesin dephosphorylation. Essential for recruiting KIF2C to the inner centromere and for correcting defective kinetochore attachments. Involved in centromeric enrichment of AUKRB in prometaphase. The chain is Shugoshin 2 from Homo sapiens (Human).